The sequence spans 118 residues: Ribonuclease P protein component (118 aa).

Belongs to the RnpA family. Consists of a catalytic RNA component (M1 or rnpB) and a protein subunit.

The enzyme catalyses Endonucleolytic cleavage of RNA, removing 5'-extranucleotides from tRNA precursor.. In terms of biological role, RNaseP catalyzes the removal of the 5'-leader sequence from pre-tRNA to produce the mature 5'-terminus. It can also cleave other RNA substrates such as 4.5S RNA. The protein component plays an auxiliary but essential role in vivo by binding to the 5'-leader sequence and broadening the substrate specificity of the ribozyme. This chain is Ribonuclease P protein component, found in Desulfatibacillum aliphaticivorans.